A 152-amino-acid chain; its full sequence is Transcriptional repressor NrdR (152 aa).

The segment at 3–34 is a zinc-finger region; it reads CPFCGHADTQVVDSRVSEDGASIRRRRRCLEC. Residues 49 to 139 form the ATP-cone domain; that stretch reads PQVVKQDGHR…VYRSFQDVAE (91 aa).

This sequence belongs to the NrdR family. The cofactor is Zn(2+).

Functionally, negatively regulates transcription of bacterial ribonucleotide reductase nrd genes and operons by binding to NrdR-boxes. This chain is Transcriptional repressor NrdR, found in Laribacter hongkongensis (strain HLHK9).